A 647-amino-acid polypeptide reads, in one-letter code: Acetyl-coenzyme A synthetase (647 aa).

CoA-binding positions include 189 to 192, threonine 307, and asparagine 331; that span reads RGGK. Residues 383-385, 407-412, aspartate 496, and arginine 511 each bind ATP; these read GEP and DTWWQT. Serine 519 contacts CoA. Arginine 522 serves as a coordination point for ATP. Residues histidine 535 and valine 538 each coordinate Mg(2+). A CoA-binding site is contributed by arginine 580. Lysine 605 bears the N6-acetyllysine mark.

The protein belongs to the ATP-dependent AMP-binding enzyme family. Mg(2+) serves as cofactor. Post-translationally, acetylated. Deacetylation by the SIR2-homolog deacetylase activates the enzyme.

It catalyses the reaction acetate + ATP + CoA = acetyl-CoA + AMP + diphosphate. Catalyzes the conversion of acetate into acetyl-CoA (AcCoA), an essential intermediate at the junction of anabolic and catabolic pathways. AcsA undergoes a two-step reaction. In the first half reaction, AcsA combines acetate with ATP to form acetyl-adenylate (AcAMP) intermediate. In the second half reaction, it can then transfer the acetyl group from AcAMP to the sulfhydryl group of CoA, forming the product AcCoA. The polypeptide is Acetyl-coenzyme A synthetase (Syntrophus aciditrophicus (strain SB)).